We begin with the raw amino-acid sequence, 419 residues long: Serine hydroxymethyltransferase (419 aa).

(6S)-5,6,7,8-tetrahydrofolate is bound by residues Leu121 and 125–127; that span reads GHL. At Lys229 the chain carries N6-(pyridoxal phosphate)lysine.

Belongs to the SHMT family. Homodimer. Pyridoxal 5'-phosphate serves as cofactor.

It is found in the cytoplasm. The catalysed reaction is (6R)-5,10-methylene-5,6,7,8-tetrahydrofolate + glycine + H2O = (6S)-5,6,7,8-tetrahydrofolate + L-serine. It functions in the pathway one-carbon metabolism; tetrahydrofolate interconversion. Its pathway is amino-acid biosynthesis; glycine biosynthesis; glycine from L-serine: step 1/1. Functionally, catalyzes the reversible interconversion of serine and glycine with tetrahydrofolate (THF) serving as the one-carbon carrier. This reaction serves as the major source of one-carbon groups required for the biosynthesis of purines, thymidylate, methionine, and other important biomolecules. Also exhibits THF-independent aldolase activity toward beta-hydroxyamino acids, producing glycine and aldehydes, via a retro-aldol mechanism. This chain is Serine hydroxymethyltransferase, found in Histophilus somni (strain 2336) (Haemophilus somnus).